Reading from the N-terminus, the 388-residue chain is Succinate--CoA ligase [ADP-forming] subunit beta (388 aa).

The 236-residue stretch at 9–244 (KQLFAEYGLP…PSQDDPREAH (236 aa)) folds into the ATP-grasp domain. Residues Lys46, 53–55 (GRG), Glu99, Thr102, and Glu107 contribute to the ATP site. Asn199 and Asp213 together coordinate Mg(2+). Substrate contacts are provided by residues Asn264 and 321–323 (GIV).

It belongs to the succinate/malate CoA ligase beta subunit family. Heterotetramer of two alpha and two beta subunits. Mg(2+) serves as cofactor.

The enzyme catalyses succinate + ATP + CoA = succinyl-CoA + ADP + phosphate. It catalyses the reaction GTP + succinate + CoA = succinyl-CoA + GDP + phosphate. It functions in the pathway carbohydrate metabolism; tricarboxylic acid cycle; succinate from succinyl-CoA (ligase route): step 1/1. Functionally, succinyl-CoA synthetase functions in the citric acid cycle (TCA), coupling the hydrolysis of succinyl-CoA to the synthesis of either ATP or GTP and thus represents the only step of substrate-level phosphorylation in the TCA. The beta subunit provides nucleotide specificity of the enzyme and binds the substrate succinate, while the binding sites for coenzyme A and phosphate are found in the alpha subunit. This chain is Succinate--CoA ligase [ADP-forming] subunit beta, found in Ectopseudomonas mendocina (strain ymp) (Pseudomonas mendocina).